A 259-amino-acid chain; its full sequence is tRNA pseudouridine synthase A (259 aa).

The active-site Nucleophile is D52. Residue Y110 coordinates substrate.

This sequence belongs to the tRNA pseudouridine synthase TruA family. As to quaternary structure, homodimer.

It catalyses the reaction uridine(38/39/40) in tRNA = pseudouridine(38/39/40) in tRNA. Functionally, formation of pseudouridine at positions 38, 39 and 40 in the anticodon stem and loop of transfer RNAs. This chain is tRNA pseudouridine synthase A, found in Coprothermobacter proteolyticus (strain ATCC 35245 / DSM 5265 / OCM 4 / BT).